Reading from the N-terminus, the 426-residue chain is Histone deacetylase 9 (426 aa).

The histone deacetylase stretch occupies residues 6–318 (KISYFYDGDV…WTVETGILLD (313 aa)). The active-site Proton donor/acceptor is histidine 137. Residues aspartate 172, histidine 174, and aspartate 261 each contribute to the Zn(2+) site. The tract at residues 383 to 426 (PDFYIPDFDEDEQNPDVRADQRSRDKQIQRDDEYFDGDNDNDAS) is disordered. Residues 397–414 (PDVRADQRSRDKQIQRDD) are compositionally biased toward basic and acidic residues. The segment covering 415–426 (EYFDGDNDNDAS) has biased composition (acidic residues).

The protein belongs to the histone deacetylase family. HD type 1 subfamily. Interacts with AHL22. Binds to farnesylated ASG2 in the cytosol. Zn(2+) is required as a cofactor.

Its subcellular location is the nucleus. It is found in the cytoplasm. It localises to the cytosol. The enzyme catalyses N(6)-acetyl-L-lysyl-[histone] + H2O = L-lysyl-[histone] + acetate. Its function is as follows. Responsible for the deacetylation of lysine residues on the N-terminal part of the core histones (H2A, H2B, H3 and H4). Histone deacetylation gives a tag for epigenetic repression and plays an important role in transcriptional regulation, cell cycle progression and developmental events. Histone deacetylases act via the formation of large multiprotein complexes. The chain is Histone deacetylase 9 (HDA9) from Arabidopsis thaliana (Mouse-ear cress).